The sequence spans 130 residues: Small ribosomal subunit protein uS11c (130 aa).

The protein belongs to the universal ribosomal protein uS11 family. Part of the 30S ribosomal subunit.

Its subcellular location is the plastid. It localises to the chloroplast. The polypeptide is Small ribosomal subunit protein uS11c (Spirogyra maxima (Green alga)).